We begin with the raw amino-acid sequence, 227 residues long: Small ribosomal subunit protein uS3 (227 aa).

The 69-residue stretch at 39–107 folds into the KH type-2 domain; the sequence is VRQLLQKRLK…PVHITIEEVR (69 aa).

Belongs to the universal ribosomal protein uS3 family. As to quaternary structure, part of the 30S ribosomal subunit. Forms a tight complex with proteins S10 and S14.

In terms of biological role, binds the lower part of the 30S subunit head. Binds mRNA in the 70S ribosome, positioning it for translation. The chain is Small ribosomal subunit protein uS3 (rpsC) from Coxiella burnetii (strain RSA 493 / Nine Mile phase I).